A 310-amino-acid chain; its full sequence is Malate dehydrogenase (310 aa).

Residues 7-12 (GAGNVG) and Asp-32 contribute to the NAD(+) site. 2 residues coordinate substrate: Arg-81 and Arg-87. NAD(+) is bound by residues Asn-94 and 117 to 119 (VSN). Residues Asn-119 and Arg-150 each contribute to the substrate site. His-174 (proton acceptor) is an active-site residue.

It belongs to the LDH/MDH superfamily. MDH type 3 family.

The enzyme catalyses (S)-malate + NAD(+) = oxaloacetate + NADH + H(+). In terms of biological role, catalyzes the reversible oxidation of malate to oxaloacetate. In Chlorobium phaeobacteroides (strain DSM 266 / SMG 266 / 2430), this protein is Malate dehydrogenase.